A 128-amino-acid chain; its full sequence is uncharacterized protein (128 aa).

This is an uncharacterized protein from Frog virus 3 (isolate Goorha) (FV-3).